The sequence spans 226 residues: Glutathione peroxidase 3 (226 aa).

The N-terminal stretch at Met-1 to Gly-24 is a signal peptide. Sec-73 is an active-site residue. Sec-73 is a non-standard amino acid (selenocysteine).

Belongs to the glutathione peroxidase family. In terms of assembly, homotetramer. In terms of tissue distribution, secreted in plasma.

The protein localises to the secreted. It carries out the reaction 2 glutathione + H2O2 = glutathione disulfide + 2 H2O. The catalysed reaction is tert-butyl hydroperoxide + 2 glutathione = tert-butanol + glutathione disulfide + H2O. Its function is as follows. Protects cells and enzymes from oxidative damage, by catalyzing the reduction of hydrogen peroxide, lipid peroxides and organic hydroperoxide, by glutathione. In Bos taurus (Bovine), this protein is Glutathione peroxidase 3.